The chain runs to 467 residues: Glycogen synthase kinase-3 (467 aa).

A compositionally biased stretch (basic and acidic residues) spans Met1–Asn20. The segment at Met1 to Asn42 is disordered. Residues Thr23–Ser37 are compositionally biased toward low complexity. The Protein kinase domain maps to Tyr56–Phe339. ATP contacts are provided by residues Ile62 to Val70 and Lys85. Asp179 serves as the catalytic Proton acceptor. Residues Tyr214 and Tyr220 each carry the phosphotyrosine; by zakA modification. Residues Ser400–His467 are disordered.

It belongs to the protein kinase superfamily. CMGC Ser/Thr protein kinase family. GSK-3 subfamily. The cofactor is Mg(2+).

It carries out the reaction L-seryl-[tau protein] + ATP = O-phospho-L-seryl-[tau protein] + ADP + H(+). It catalyses the reaction L-threonyl-[tau protein] + ATP = O-phospho-L-threonyl-[tau protein] + ADP + H(+). With respect to regulation, inhibited by lithium. Lithium inhibition is competitive with respect to magnesium but non-competitive with respect to the peptide substrate. Functionally, during cellular differentiation, may mediate an extracellular cyclic AMP stimulated signal transduction pathway that regulates prespore and prestalk B-cell proportions through inhibition of stalk cell formation and induction of prespore cell differentiation. The cAMP receptor carC appears to activate gskA via the tyrosine kinases zakA and zak2, to stimulate prespore differentiation, while carD appears to negatively regulate gskA, to promote prestalk formation. This chain is Glycogen synthase kinase-3 (gskA), found in Dictyostelium discoideum (Social amoeba).